The primary structure comprises 138 residues: Ribosome maturation factor RimP (138 aa).

The protein belongs to the RimP family.

The protein localises to the cytoplasm. In terms of biological role, required for maturation of 30S ribosomal subunits. The chain is Ribosome maturation factor RimP from Campylobacter concisus (strain 13826).